The sequence spans 402 residues: Secondary metabolism regulator laeA (402 aa).

Positions 1-70 (MSLKYYLNDL…MSPTEVCSTD (70 aa)) are disordered. Residues 11-21 (SDSDSESESEC) show a composition bias toward acidic residues.

It belongs to the methyltransferase superfamily. LaeA methyltransferase family.

The protein resides in the nucleus. The catalysed reaction is L-methionyl-[protein] + S-adenosyl-L-methionine = S-methyl-L-methionyl-[protein] + S-adenosyl-L-homocysteine. Functionally, methyltransferase that performs automethylation. No other methyl-accepting substrate has been identified yet. Acts as a global regulator for secondary metabolite gene expression. Negatively regulates the production of coprinoferrin, a structurally novel acylated tripeptide hydroxamate siderophore. This chain is Secondary metabolism regulator laeA, found in Coprinopsis cinerea (strain Okayama-7 / 130 / ATCC MYA-4618 / FGSC 9003) (Inky cap fungus).